Reading from the N-terminus, the 347-residue chain is Holliday junction branch migration complex subunit RuvB (347 aa).

The tract at residues M1–Y186 is large ATPase domain (RuvB-L). ATP contacts are provided by residues L25, R26, G67, K70, T71, T72, E133–Y135, R176, Y186, and R223. T71 contacts Mg(2+). The segment at S187–R257 is small ATPAse domain (RuvB-S). Residues G260 to F347 form a head domain (RuvB-H) region. DNA-binding residues include R315 and R320.

It belongs to the RuvB family. In terms of assembly, homohexamer. Forms an RuvA(8)-RuvB(12)-Holliday junction (HJ) complex. HJ DNA is sandwiched between 2 RuvA tetramers; dsDNA enters through RuvA and exits via RuvB. An RuvB hexamer assembles on each DNA strand where it exits the tetramer. Each RuvB hexamer is contacted by two RuvA subunits (via domain III) on 2 adjacent RuvB subunits; this complex drives branch migration. In the full resolvosome a probable DNA-RuvA(4)-RuvB(12)-RuvC(2) complex forms which resolves the HJ.

The protein localises to the cytoplasm. The enzyme catalyses ATP + H2O = ADP + phosphate + H(+). Functionally, the RuvA-RuvB-RuvC complex processes Holliday junction (HJ) DNA during genetic recombination and DNA repair, while the RuvA-RuvB complex plays an important role in the rescue of blocked DNA replication forks via replication fork reversal (RFR). RuvA specifically binds to HJ cruciform DNA, conferring on it an open structure. The RuvB hexamer acts as an ATP-dependent pump, pulling dsDNA into and through the RuvAB complex. RuvB forms 2 homohexamers on either side of HJ DNA bound by 1 or 2 RuvA tetramers; 4 subunits per hexamer contact DNA at a time. Coordinated motions by a converter formed by DNA-disengaged RuvB subunits stimulates ATP hydrolysis and nucleotide exchange. Immobilization of the converter enables RuvB to convert the ATP-contained energy into a lever motion, pulling 2 nucleotides of DNA out of the RuvA tetramer per ATP hydrolyzed, thus driving DNA branch migration. The RuvB motors rotate together with the DNA substrate, which together with the progressing nucleotide cycle form the mechanistic basis for DNA recombination by continuous HJ branch migration. Branch migration allows RuvC to scan DNA until it finds its consensus sequence, where it cleaves and resolves cruciform DNA. This chain is Holliday junction branch migration complex subunit RuvB, found in Borrelia garinii subsp. bavariensis (strain ATCC BAA-2496 / DSM 23469 / PBi) (Borreliella bavariensis).